A 304-amino-acid polypeptide reads, in one-letter code: Histone H1.8 (304 aa).

The segment covering 1–24 (MAPGSVSSVSSSSFPSRDTSPSGS) has biased composition (low complexity). 3 disordered regions span residues 1–38 (MAPG…PSCR), 110–248 (SKAK…NSVA), and 270–304 (TVQE…NTQA). The 79-residue stretch at 45-123 (RNPTMLHMVL…GATGSFKLVP (79 aa)) folds into the H15 domain. The span at 132–144 (APKAGRGAAGAKE) shows a compositional bias: low complexity. 3 stretches are compositionally biased toward basic and acidic residues: residues 153–166 (LKKD…MEKG), 189–202 (KPKE…KQDK), and 225–237 (ANAH…EKSK). The Nuclear localization signal signature appears at 154–170 (KKDQVGKATMEKGQKRR). The segment covering 270–281 (TVQETKVPTPSQ) has biased composition (polar residues).

This sequence belongs to the histone H1/H5 family. In terms of tissue distribution, oocyte-specific.

It is found in the cytoplasm. Its subcellular location is the nucleus. It localises to the chromosome. Its function is as follows. May play a key role in the control of gene expression during oogenesis and early embryogenesis, presumably through the perturbation of chromatin structure. Essential for meiotic maturation of germinal vesicle-stage oocytes. The somatic type linker histone H1c is rapidly replaced by H1oo in a donor nucleus transplanted into an oocyte. The greater mobility of H1oo as compared to H1c may contribute to this rapid replacement and increased instability of the embryonic chromatin structure. The rapid replacement of H1c with H1oo may play an important role in nuclear remodeling. This chain is Histone H1.8, found in Mus musculus (Mouse).